Consider the following 91-residue polypeptide: Probable Fe(2+)-trafficking protein (91 aa).

This sequence belongs to the Fe(2+)-trafficking protein family.

Its function is as follows. Could be a mediator in iron transactions between iron acquisition and iron-requiring processes, such as synthesis and/or repair of Fe-S clusters in biosynthetic enzymes. This chain is Probable Fe(2+)-trafficking protein, found in Burkholderia cenocepacia (strain ATCC BAA-245 / DSM 16553 / LMG 16656 / NCTC 13227 / J2315 / CF5610) (Burkholderia cepacia (strain J2315)).